The primary structure comprises 225 residues: UPF0173 metal-dependent hydrolase PYRAB05000 (225 aa).

Belongs to the UPF0173 family.

This is UPF0173 metal-dependent hydrolase PYRAB05000 from Pyrococcus abyssi (strain GE5 / Orsay).